A 115-amino-acid chain; its full sequence is MGTRLLCWVVLGFLGTDHTGAGVSQSPRYKVAKRGQDVALRCDPISGHVSLFWYQQALGQGPEFLTYFQNEAQLDKSGLPSDRFFAERPEGSVSTLKIQRTQQEDSAVYLCASSL.

Residues 1 to 21 (MGTRLLCWVVLGFLGTDHTGA) form the signal peptide. Positions 22-115 (GVSQSPRYKV…SAVYLCASSL (94 aa)) constitute an Ig-like domain. A disulfide bond links Cys-42 and Cys-111.

In terms of assembly, alpha-beta TR is a heterodimer composed of an alpha and beta chain; disulfide-linked. The alpha-beta TR is associated with the transmembrane signaling CD3 coreceptor proteins to form the TR-CD3 (TcR or TCR). The assembly of alpha-beta TR heterodimers with CD3 occurs in the endoplasmic reticulum where a single alpha-beta TR heterodimer associates with one CD3D-CD3E heterodimer, one CD3G-CD3E heterodimer and one CD247 homodimer forming a stable octameric structure. CD3D-CD3E and CD3G-CD3E heterodimers preferentially associate with TR alpha and TR beta chains, respectively. The association of the CD247 homodimer is the last step of TcR assembly in the endoplasmic reticulum and is required for transport to the cell surface.

It is found in the cell membrane. V region of the variable domain of T cell receptor (TR) beta chain that participates in the antigen recognition. Alpha-beta T cell receptors are antigen specific receptors which are essential to the immune response and are present on the cell surface of T lymphocytes. Recognize peptide-major histocompatibility (MH) (pMH) complexes that are displayed by antigen presenting cells (APC), a prerequisite for efficient T cell adaptive immunity against pathogens. Binding of alpha-beta TR to pMH complex initiates TR-CD3 clustering on the cell surface and intracellular activation of LCK that phosphorylates the ITAM motifs of CD3G, CD3D, CD3E and CD247 enabling the recruitment of ZAP70. In turn ZAP70 phosphorylates LAT, which recruits numerous signaling molecules to form the LAT signalosome. The LAT signalosome propagates signal branching to three major signaling pathways, the calcium, the mitogen-activated protein kinase (MAPK) kinase and the nuclear factor NF-kappa-B (NF-kB) pathways, leading to the mobilization of transcription factors that are critical for gene expression and essential for T cell growth and differentiation. The T cell repertoire is generated in the thymus, by V-(D)-J rearrangement. This repertoire is then shaped by intrathymic selection events to generate a peripheral T cell pool of self-MH restricted, non-autoaggressive T cells. Post-thymic interaction of alpha-beta TR with the pMH complexes shapes TR structural and functional avidity. This Homo sapiens (Human) protein is T cell receptor beta variable 7-8.